A 139-amino-acid chain; its full sequence is Putative pre-16S rRNA nuclease (139 aa).

It belongs to the YqgF nuclease family.

The protein localises to the cytoplasm. In terms of biological role, could be a nuclease involved in processing of the 5'-end of pre-16S rRNA. The chain is Putative pre-16S rRNA nuclease from Streptococcus suis (strain 98HAH33).